We begin with the raw amino-acid sequence, 289 residues long: ATP synthase gamma chain (289 aa).

The protein belongs to the ATPase gamma chain family. In terms of assembly, F-type ATPases have 2 components, CF(1) - the catalytic core - and CF(0) - the membrane proton channel. CF(1) has five subunits: alpha(3), beta(3), gamma(1), delta(1), epsilon(1). CF(0) has three main subunits: a, b and c.

It is found in the cell inner membrane. Its function is as follows. Produces ATP from ADP in the presence of a proton gradient across the membrane. The gamma chain is believed to be important in regulating ATPase activity and the flow of protons through the CF(0) complex. This chain is ATP synthase gamma chain, found in Dichelobacter nodosus (strain VCS1703A).